Reading from the N-terminus, the 204-residue chain is Copper-binding protein CutI (204 aa).

A signal peptide spans 1-26 (MLKKIALTLCPAIVGSLLFFTAPASA). Positions 27 and 50 each coordinate Cu(2+). At 27–178 (HVSVKPAESA…DDSENSGSSA (152 aa)) the chain is on the extracellular side. A disordered region spans residues 146–176 (PHSITNITSAKQVTDEHGATKTEDDSENSGS). The span at 147 to 157 (HSITNITSAKQ) shows a compositional bias: polar residues. Positions 158–168 (VTDEHGATKTE) are enriched in basic and acidic residues. Residues 179 to 199 (LDITAMVLSAAAIILSVAALV) form a helical membrane-spanning segment. Over 200-204 (KKKRA) the chain is Cytoplasmic.

The protein resides in the cell membrane. Copper-binding protein that probably plays a role in copper homeostasis. May act as metallochaperone, possibly to facilitate copper uptake via the CutJ/YcnJ importer. Preferentially binds Cu in its oxidized Cu(II) state in a 1:1 stoichiometry. The protein is Copper-binding protein CutI of Bacillus subtilis (strain 168).